The following is a 623-amino-acid chain: Chaperone protein HtpG (623 aa).

The interval 1–341 (MEKREFKAES…SQDLSLNISR (341 aa)) is a; substrate-binding. Residues 342–549 (EMLQHDRQLS…EGEVSIEMEK (208 aa)) form a b region. Residues 550–623 (ILSAMPNNQG…FTNDICKLMK (74 aa)) form a c region.

The protein belongs to the heat shock protein 90 family. As to quaternary structure, homodimer.

Its subcellular location is the cytoplasm. Functionally, molecular chaperone. Has ATPase activity. The polypeptide is Chaperone protein HtpG (Clostridium perfringens (strain ATCC 13124 / DSM 756 / JCM 1290 / NCIMB 6125 / NCTC 8237 / Type A)).